The sequence spans 418 residues: E3 ubiquitin-protein ligase pellino homolog 1 (418 aa).

Positions 13–200 (APVKYGELIV…MHPRNGFTED (188 aa)) constitute an FHA; atypical domain. Ser-121 is modified (phosphoserine; by ATM). At Thr-127 the chain carries Phosphothreonine; by ATM. Residues 311–399 (CGHVHGYHNW…TFHAACPFCA (89 aa)) are ring-like domain; necessary for ubiqitination of RIPK3.

Belongs to the pellino family. In terms of assembly, interacts with MAP3K7. Upon IL1B treatment, forms a complex with TRAF6, IRAK1, IRAK4 and MYD88; this complex recruits MAP3K7/TAK1, TAB1 and TAB2 to mediate NF-kappa-B activation. Direct binding of SMAD6 to PELI1 prevents the complex formation and hence negatively regulates IL1R-TLR signaling and eventually NF-kappa-B-mediated gene expression. Interacts (via atypical FHA domain) with RIPK3; preferentially binds to the 'Thr-182' phosphorylated form of RIPK3. Interacts with RIPK1 and IRAK1. Post-translationally, phosphorylation by IRAK1 and IRAK4 enhances its E3 ligase activity. Phosphorylated by ATM in response to DNA damage, promoting localization to DNA double-strand breaks (DSBs) and ability to mediate 'Lys-63'-linked ubiquitination of NBN. In terms of processing, sumoylated. As to expression, expressed at high levels in normal skin but decreased in keratinocytes from toxic epidermal necrolysis (TEN) patients (at protein level).

It is found in the chromosome. The enzyme catalyses S-ubiquitinyl-[E2 ubiquitin-conjugating enzyme]-L-cysteine + [acceptor protein]-L-lysine = [E2 ubiquitin-conjugating enzyme]-L-cysteine + N(6)-ubiquitinyl-[acceptor protein]-L-lysine.. Its pathway is protein modification; protein ubiquitination. Its function is as follows. E3 ubiquitin ligase catalyzing the covalent attachment of ubiquitin moieties onto substrate proteins. Involved in the TLR and IL-1 signaling pathways via interaction with the complex containing IRAK kinases and TRAF6. Acts as a positive regulator of inflammatory response in microglia through activation of NF-kappa-B and MAP kinase. Mediates 'Lys-63'-linked polyubiquitination of IRAK1 allowing subsequent NF-kappa-B activation. Conjugates 'Lys-63'-linked ubiquitin chains to the adapter protein ASC/PYCARD, which in turn is crucial for NLRP3 inflammasome activation. Mediates 'Lys-48'-linked polyubiquitination of RIPK3 leading to its subsequent proteasome-dependent degradation; preferentially recognizes and mediates the degradation of the 'Thr-182' phosphorylated form of RIPK3. Negatively regulates necroptosis by reducing RIPK3 expression. Mediates 'Lys-63'-linked ubiquitination of RIPK1. Following phosphorylation by ATM, catalyzes 'Lys-63'-linked ubiquitination of NBN, promoting DNA repair via homologous recombination. Negatively regulates activation of the metabolic mTORC1 signaling pathway by mediating 'Lys-63'-linked ubiquitination of mTORC1-inhibitory protein TSC1 and thereby promoting TSC1/TSC2 complex stability. This Homo sapiens (Human) protein is E3 ubiquitin-protein ligase pellino homolog 1.